The sequence spans 863 residues: ATP-dependent helicase Lhr-Core protein 2 (863 aa).

Positions 30, 37, 60, 61, 179, 180, 377, and 380 each coordinate ATP. The region spanning 41 to 234 is the Helicase ATP-binding domain; that stretch reads VIEIHKGENV…FVFGFNDDGT (194 aa). The DEAH box signature appears at 179-182; it reads DEVH. The region spanning 275–424 is the Helicase C-terminal domain; sequence RLDELIEQHR…RIKIPQNPLD (150 aa). Residues 418 to 512 form a WH domain region; it reads IPQNPLDVLV…AIYYMNTGTI (95 aa). The segment at 513–863 is domain 4; sequence PDEAKIEVYT…KIMAMIGELE (351 aa).

It belongs to the Lhr helicase family. Lhr-Core subfamily. In terms of assembly, monomer.

The enzyme catalyses ATP + H2O = ADP + phosphate + H(+). With respect to regulation, unwinding of dsRNA duplexes is inhibited by AMP-PMP and ATP-gamma-S. Its function is as follows. A DNA:RNA helicase with a significant strand annealing activity, probably involved in DNA repair and RNA transactions. In vitro has a slow helicase activity with a preference for 3'-overhang duplexes; displaces RNA from 3'-overhang DNA:RNA or RNA:RNA duplexes. 3'-tailed double-stranded (ds)DNA is not unwound. The slow helicase activity on RNA duplexes is ATP-independent. Has strand annealing properties in the absence of ATP; forms 3'-overhang DNA:RNA, 3'-overhang dsRNA and 3'-overhang dsDNA duplexes but not 5'-overhang duplexes. A nucleic acid-dependent ATPase; single-stranded (ss)DNA and RNA are equally stimulatory. Binds ssDNA, RNA, dsDNA and dsRNA duplexes. This Thermococcus barophilus (strain DSM 11836 / MP) protein is ATP-dependent helicase Lhr-Core protein 2.